We begin with the raw amino-acid sequence, 97 residues long: Large ribosomal subunit protein uL23 (97 aa).

It belongs to the universal ribosomal protein uL23 family. As to quaternary structure, part of the 50S ribosomal subunit. Contacts protein L29, and trigger factor when it is bound to the ribosome.

In terms of biological role, one of the early assembly proteins it binds 23S rRNA. One of the proteins that surrounds the polypeptide exit tunnel on the outside of the ribosome. Forms the main docking site for trigger factor binding to the ribosome. The polypeptide is Large ribosomal subunit protein uL23 (Pelagibacter ubique (strain HTCC1062)).